The primary structure comprises 485 residues: ATP-dependent protease ATPase subunit HslU (485 aa).

ATP is bound by residues Ile-22 and 64–69; that span reads GVGKTE. The interval 146–189 is disordered; it reads KKTAATSAQPQDVSQASSGTTISLPSVSSTAQAEEHKAQNENDM. Residues 149-177 show a composition bias toward polar residues; the sequence is AATSAQPQDVSQASSGTTISLPSVSSTAQ. Positions 178 to 189 are enriched in basic and acidic residues; that stretch reads AEEHKAQNENDM. Residues Asp-297, Glu-363, and Arg-435 each contribute to the ATP site.

The protein belongs to the ClpX chaperone family. HslU subfamily. A double ring-shaped homohexamer of HslV is capped on each side by a ring-shaped HslU homohexamer. The assembly of the HslU/HslV complex is dependent on binding of ATP.

The protein localises to the cytoplasm. ATPase subunit of a proteasome-like degradation complex; this subunit has chaperone activity. The binding of ATP and its subsequent hydrolysis by HslU are essential for unfolding of protein substrates subsequently hydrolyzed by HslV. HslU recognizes the N-terminal part of its protein substrates and unfolds these before they are guided to HslV for hydrolysis. The sequence is that of ATP-dependent protease ATPase subunit HslU from Treponema denticola (strain ATCC 35405 / DSM 14222 / CIP 103919 / JCM 8153 / KCTC 15104).